Reading from the N-terminus, the 212-residue chain is Large ribosomal subunit protein uL4 (212 aa).

This sequence belongs to the universal ribosomal protein uL4 family. As to quaternary structure, part of the 50S ribosomal subunit.

One of the primary rRNA binding proteins, this protein initially binds near the 5'-end of the 23S rRNA. It is important during the early stages of 50S assembly. It makes multiple contacts with different domains of the 23S rRNA in the assembled 50S subunit and ribosome. Functionally, forms part of the polypeptide exit tunnel. This is Large ribosomal subunit protein uL4 from Phenylobacterium zucineum (strain HLK1).